Here is a 311-residue protein sequence, read N- to C-terminus: MKALIFLGAIIAGVLSDEWSPMDPEEVAFEEAKCMEDHFGNDFGLAEKWMKWNLAESDGKTACYVKCLVEALGMYDKQAFQPNNIKRQYEAYKSDNGVDQAKSDAISNELGKIDAKDGKCESIAKGFIQVNNANKGVLEKIYLLDSSVRDAIYKKNPQIKPKGISIFRFCGKQFYQDGEAAYCNVRKHGFSDDPKFIKHSNCTTRGMRWMKKNGEMDESAILRGLHAVNENGKDDVVKKSLQNCKAKDESKARDYYKCIYDGLGEQLFMKVLDYIEVRSENYSYRLREATSKYDANAMRSKVKALDSEAKC.

The signal sequence occupies residues 1 to 16; sequence MKALIFLGAIIAGVLS. Intrachain disulfides connect Cys-34-Cys-67 and Cys-63-Cys-120. The ADP site is built by Ser-146, Arg-149, Tyr-153, and Lys-160. 3 disulfides stabilise this stretch: Cys-170–Cys-202, Cys-183–Cys-311, and Cys-244–Cys-258. ADP contacts are provided by Asn-281, Tyr-282, and Ser-283.

This sequence belongs to the PBP/GOBP family. In terms of tissue distribution, distal lateral and medial lobes of female mosquito salivary gland (at protein level). Expressed in the head and thorax of the female mosquitoes, where the salivary glands are located. Expressed in salivary gland. Not detected in the female mosquito abdomen. Not detected in the male mosquito tissues.

The protein localises to the secreted. Functionally, modulates blood feeding of female mosquitoes on vertebrate species by binding and sequestering different mediators involved in the host response. Binds adenine, adenosine, AMP, ADP and ATP, with the highest affinity to ATP and ADP. Inhibits agonist-induced platelet aggregation and hemostasis. The protein is Long form salivary protein D7L1 of Culex quinquefasciatus (Southern house mosquito).